We begin with the raw amino-acid sequence, 448 residues long: MGKFLQLLSHPIELKAVIQLFGFRQPLHPGKRDVNDKELVRCYELLNLTSRSFAAVIEELHPELRDAVMIFYLVLRALDTIEDDMTIKSSIKIPLLREFDTKLNTKNWTFDGNGPNEKDRTVLVEFDKILNVYHRLKPQYQDIIKSITFKMGNGMADYILDEEFNVNGVATVEDYNLYCHYVAGLVGEGLTNLFVLANFGDKTLTENNFAKADSMGLFLQKTNIIRDYHEDLQDGRSFWPREIWSKYTENLQDFHKVKTPAKEFAGVSCINELVLNALGHVTDCLDYLSLVKDPSSFSFCAIPQVMAVATLAEVYNNPKVLHGVVKIRKGTTCRLILESRTLPGVVKIFKEYIQVINHKSSVRDPNYLKIGIKCGEIEQYCEMIYPNKQALPPSMKSLPENKFTKIVASRESIDLSVQRRIEQENFNCNVVLFGIGALILSLIYFVLY.

Residues 428–448 traverse the membrane as a helical segment; it reads CNVVLFGIGALILSLIYFVLY.

This sequence belongs to the phytoene/squalene synthase family. Requires Mg(2+) as cofactor.

It is found in the endoplasmic reticulum membrane. Its subcellular location is the microsome. It carries out the reaction 2 (2E,6E)-farnesyl diphosphate + NADPH + H(+) = squalene + 2 diphosphate + NADP(+). The catalysed reaction is 2 (2E,6E)-farnesyl diphosphate + NADH + H(+) = squalene + 2 diphosphate + NAD(+). Its pathway is terpene metabolism; lanosterol biosynthesis; lanosterol from farnesyl diphosphate: step 1/3. Squalene synthase; part of the third module of ergosterol biosynthesis pathway that includes the late steps of the pathway. ERG9 produces squalene from 2 farnesyl pyrophosphate moieties. The third module or late pathway involves the ergosterol synthesis itself through consecutive reactions that mainly occur in the endoplasmic reticulum (ER) membrane. Firstly, the squalene synthase ERG9 catalyzes the condensation of 2 farnesyl pyrophosphate moieties to form squalene, which is the precursor of all steroids. Squalene synthase is crucial for balancing the incorporation of farnesyl diphosphate (FPP) into sterol and nonsterol isoprene synthesis. Secondly, the squalene epoxidase ERG1 catalyzes the stereospecific oxidation of squalene to (S)-2,3-epoxysqualene, which is considered to be a rate-limiting enzyme in steroid biosynthesis. Then, the lanosterol synthase ERG7 catalyzes the cyclization of (S)-2,3 oxidosqualene to lanosterol, a reaction that forms the sterol core. In the next steps, lanosterol is transformed to zymosterol through a complex process involving various demethylation, reduction and desaturation reactions. The lanosterol 14-alpha-demethylase ERG11 (also known as CYP51) catalyzes C14-demethylation of lanosterol to produce 4,4'-dimethyl cholesta-8,14,24-triene-3-beta-ol, which is critical for ergosterol biosynthesis. The C-14 reductase ERG24 reduces the C14=C15 double bond of 4,4-dimethyl-cholesta-8,14,24-trienol to produce 4,4-dimethyl-cholesta-8,24-dienol. 4,4-dimethyl-cholesta-8,24-dienol is substrate of the C-4 demethylation complex ERG25-ERG26-ERG27 in which ERG25 catalyzes the three-step monooxygenation required for the demethylation of 4,4-dimethyl and 4alpha-methylsterols, ERG26 catalyzes the oxidative decarboxylation that results in a reduction of the 3-beta-hydroxy group at the C-3 carbon to an oxo group, and ERG27 is responsible for the reduction of the keto group on the C-3. ERG28 has a role as a scaffold to help anchor ERG25, ERG26 and ERG27 to the endoplasmic reticulum and ERG29 regulates the activity of the iron-containing C4-methylsterol oxidase ERG25. Then, the sterol 24-C-methyltransferase ERG6 catalyzes the methyl transfer from S-adenosyl-methionine to the C-24 of zymosterol to form fecosterol. The C-8 sterol isomerase ERG2 catalyzes the reaction which results in unsaturation at C-7 in the B ring of sterols and thus converts fecosterol to episterol. The sterol-C5-desaturase ERG3 then catalyzes the introduction of a C-5 double bond in the B ring to produce 5-dehydroepisterol. The C-22 sterol desaturase ERG5 further converts 5-dehydroepisterol into ergosta-5,7,22,24(28)-tetraen-3beta-ol by forming the C-22(23) double bond in the sterol side chain. Finally, ergosta-5,7,22,24(28)-tetraen-3beta-ol is substrate of the C-24(28) sterol reductase ERG4 to produce ergosterol. The sequence is that of Squalene synthase ERG9 from Candida albicans (strain SC5314 / ATCC MYA-2876) (Yeast).